Consider the following 354-residue polypeptide: Major egg antigen (354 aa).

The tract at residues 1–21 is disordered; sequence MSGGKQHNAVSIPVNREQRSF. 2 sHSP domains span residues 122-233 and 251-354; these read SVND…VAVR and AKGV…AITH.

Belongs to the small heat shock protein (HSP20) family.

In Schistosoma mansoni (Blood fluke), this protein is Major egg antigen.